The sequence spans 346 residues: Dihydroorotase (346 aa).

Zn(2+)-binding residues include H13 and H15. Substrate is bound by residues 15–17 (HLR) and N41. K99, H136, and H174 together coordinate Zn(2+). K99 is modified (N6-carboxylysine). A substrate-binding site is contributed by H136. Substrate is bound at residue L219. D247 lines the Zn(2+) pocket. D247 is an active-site residue. Residues H251 and A263 each coordinate substrate.

Belongs to the metallo-dependent hydrolases superfamily. DHOase family. Class II DHOase subfamily. As to quaternary structure, homodimer. Requires Zn(2+) as cofactor.

The catalysed reaction is (S)-dihydroorotate + H2O = N-carbamoyl-L-aspartate + H(+). It participates in pyrimidine metabolism; UMP biosynthesis via de novo pathway; (S)-dihydroorotate from bicarbonate: step 3/3. Its function is as follows. Catalyzes the reversible cyclization of carbamoyl aspartate to dihydroorotate. This is Dihydroorotase from Chelativorans sp. (strain BNC1).